A 347-amino-acid polypeptide reads, in one-letter code: Protein RecA (347 aa).

Glycine 67 to threonine 74 provides a ligand contact to ATP.

Belongs to the RecA family.

It is found in the cytoplasm. Its function is as follows. Can catalyze the hydrolysis of ATP in the presence of single-stranded DNA, the ATP-dependent uptake of single-stranded DNA by duplex DNA, and the ATP-dependent hybridization of homologous single-stranded DNAs. It interacts with LexA causing its activation and leading to its autocatalytic cleavage. In Helicobacter pylori (strain Shi470), this protein is Protein RecA.